Reading from the N-terminus, the 127-residue chain is Protein chibby homolog 1 (127 aa).

The segment at 1–25 (MPLFGSIFSPKKTPPRKSASLSNLH) is disordered. Residues serine 9 and serine 20 each carry the phosphoserine modification. A minimal region for the interaction with PKD2 region spans residues 60–112 (VADSVISGGVDRRETQRLRKRNQQLEEENNLLRLKVDILLDMLSETTAESHLK). Residues 68–110 (GVDRRETQRLRKRNQQLEEENNLLRLKVDILLDMLSETTAESH) adopt a coiled-coil conformation. Residues 77-98 (LRKRNQQLEEENNLLRLKVDIL) are leucine-zipper; mediates homodimerization.

Belongs to the chibby family. Homodimer. Homodimerization is essential for nuclear localization and interaction with KPNA4 but is dispensable for interaction with CTNNB1. Interacts with polycystin-2/PKD2 and GM130. Interacts with the C-terminal region of CTNNB1. Interacts (C-terminus) with TCIM (C-terminus), TCIM competes with CTNNB1 for the interaction with CBY1. Interacts with FAM92A; this interaction facilitates targeting of FAM92A to cilium basal body. Interacts with CIBAR2. Interacts with KPNA4. In terms of tissue distribution, found in heart, brain, lung, liver, muscle, kidney and testis. Levels are approximately 3-fold higher in embryonic and adult heart than in lung or liver.

It localises to the nucleus speckle. Its subcellular location is the cytoplasm. The protein resides in the cytoskeleton. It is found in the cilium basal body. The protein localises to the microtubule organizing center. It localises to the centrosome. Its subcellular location is the centriole. The protein resides in the golgi apparatus. It is found in the trans-Golgi network. The protein localises to the cell projection. It localises to the cilium. Its subcellular location is the flagellum. The protein resides in the nucleus. In terms of biological role, inhibits the Wnt/Wingless pathway by binding to CTNNB1/beta-catenin and inhibiting beta-catenin-mediated transcriptional activation through competition with TCF/LEF transcription factors. Has also been shown to play a role in regulating the intracellular trafficking of polycystin-2/PKD2 and possibly of other intracellular proteins. Promotes adipocyte and cardiomyocyte differentiation. The sequence is that of Protein chibby homolog 1 (Cby1) from Mus musculus (Mouse).